Reading from the N-terminus, the 380-residue chain is Cytochrome b (380 aa).

4 helical membrane passes run 33-53 (FGSL…FLAM), 77-98 (WLIR…FLHV), 113-133 (WNMG…GYVL), and 178-198 (FFAF…VHLL). Heme b is bound by residues His-83 and His-97. Residues His-182 and His-196 each coordinate heme b. His-201 provides a ligand contact to a ubiquinone. 4 consecutive transmembrane segments (helical) span residues 226 to 246 (IKDF…VLFF), 288 to 308 (LGGV…PLLH), 320 to 340 (ITQT…WIGG), and 347 to 367 (FIMI…IFMP).

Belongs to the cytochrome b family. As to quaternary structure, the cytochrome bc1 complex contains 11 subunits: 3 respiratory subunits (MT-CYB, CYC1 and UQCRFS1), 2 core proteins (UQCRC1 and UQCRC2) and 6 low-molecular weight proteins (UQCRH/QCR6, UQCRB/QCR7, UQCRQ/QCR8, UQCR10/QCR9, UQCR11/QCR10 and a cleavage product of UQCRFS1). This cytochrome bc1 complex then forms a dimer. Heme b is required as a cofactor.

The protein resides in the mitochondrion inner membrane. In terms of biological role, component of the ubiquinol-cytochrome c reductase complex (complex III or cytochrome b-c1 complex) that is part of the mitochondrial respiratory chain. The b-c1 complex mediates electron transfer from ubiquinol to cytochrome c. Contributes to the generation of a proton gradient across the mitochondrial membrane that is then used for ATP synthesis. This Chionomys roberti (Robert's snow vole) protein is Cytochrome b (MT-CYB).